The chain runs to 213 residues: 3-isopropylmalate dehydratase small subunit (213 aa).

Belongs to the LeuD family. LeuD type 1 subfamily. In terms of assembly, heterodimer of LeuC and LeuD.

The enzyme catalyses (2R,3S)-3-isopropylmalate = (2S)-2-isopropylmalate. Its pathway is amino-acid biosynthesis; L-leucine biosynthesis; L-leucine from 3-methyl-2-oxobutanoate: step 2/4. Its function is as follows. Catalyzes the isomerization between 2-isopropylmalate and 3-isopropylmalate, via the formation of 2-isopropylmaleate. In Neisseria meningitidis serogroup B (strain ATCC BAA-335 / MC58), this protein is 3-isopropylmalate dehydratase small subunit.